Reading from the N-terminus, the 32-residue chain is Natriuretic peptide Coa_NP2 (32 aa).

C8 and C24 form a disulfide bridge.

Belongs to the natriuretic peptide family. Snake NP subfamily. Expressed by the venom gland.

The protein resides in the secreted. In terms of biological role, snake venom natriuretic peptide that exhibits hypotensive and vasorelaxant effects. Produces a dose-dependent hypotension in rats, followed by significant increases in concentrations of markers of nitric oxide (NO) formation measured in the plasma and vasorelaxation in a thoracic aortic ring bath. The peptide may exert its hypotensive action, at least in part, through stimulation of NO production. The vasorelaxant effect is endothelium-dependent and does not appear to be mediated by the natriuretic peptide receptor-A, as its action is not modified by isatin (a potent NPR1 antagonist). May act by activating the natriuretic peptide receptor-B (NPR2). The polypeptide is Natriuretic peptide Coa_NP2 (Crotalus lutosus abyssus (Grand Canyon rattlesnake)).